A 548-amino-acid chain; its full sequence is Probable malate:quinone oxidoreductase (548 aa).

Residues 522 to 548 (KPQAADSTPKPQLKPKPVQKEVADIAL) are disordered. Basic and acidic residues predominate over residues 539-548 (VQKEVADIAL).

The protein belongs to the MQO family. The cofactor is FAD.

The enzyme catalyses (S)-malate + a quinone = a quinol + oxaloacetate. It participates in carbohydrate metabolism; tricarboxylic acid cycle; oxaloacetate from (S)-malate (quinone route): step 1/1. The sequence is that of Probable malate:quinone oxidoreductase from Escherichia coli O9:H4 (strain HS).